The chain runs to 154 residues: Small ribosomal subunit protein uS15 (154 aa).

The segment at Met1 to Trp23 is disordered.

Belongs to the universal ribosomal protein uS15 family. Part of the 30S ribosomal subunit.

In Staphylothermus marinus (strain ATCC 43588 / DSM 3639 / JCM 9404 / F1), this protein is Small ribosomal subunit protein uS15.